The primary structure comprises 77 residues: U8-lycotoxin-Ls1p (77 aa).

Positions 1–20 (MKLMIFTGLVLFAIVSLIEA) are cleaved as a signal peptide. A propeptide spanning residues 21 to 26 (QAENEK) is cleaved from the precursor.

The protein belongs to the neurotoxin 19 (CSTX) family. 08 (U8-Lctx) subfamily. Post-translationally, contains 4 disulfide bonds. Expressed by the venom gland.

The protein localises to the secreted. This is U8-lycotoxin-Ls1p from Lycosa singoriensis (Wolf spider).